A 175-amino-acid polypeptide reads, in one-letter code: ATP synthase subunit delta (175 aa).

This sequence belongs to the ATPase delta chain family. F-type ATPases have 2 components, F(1) - the catalytic core - and F(0) - the membrane proton channel. F(1) has five subunits: alpha(3), beta(3), gamma(1), delta(1), epsilon(1). F(0) has three main subunits: a(1), b(2) and c(10-14). The alpha and beta chains form an alternating ring which encloses part of the gamma chain. F(1) is attached to F(0) by a central stalk formed by the gamma and epsilon chains, while a peripheral stalk is formed by the delta and b chains.

Its subcellular location is the cell membrane. F(1)F(0) ATP synthase produces ATP from ADP in the presence of a proton or sodium gradient. F-type ATPases consist of two structural domains, F(1) containing the extramembraneous catalytic core and F(0) containing the membrane proton channel, linked together by a central stalk and a peripheral stalk. During catalysis, ATP synthesis in the catalytic domain of F(1) is coupled via a rotary mechanism of the central stalk subunits to proton translocation. Its function is as follows. This protein is part of the stalk that links CF(0) to CF(1). It either transmits conformational changes from CF(0) to CF(1) or is implicated in proton conduction. The polypeptide is ATP synthase subunit delta (Lactococcus lactis subsp. cremoris (strain MG1363)).